The chain runs to 348 residues: Probable dual-specificity RNA methyltransferase RlmN (348 aa).

Glu93 acts as the Proton acceptor in catalysis. The Radical SAM core domain occupies 99-333 (TEKRLTACLS…VSFRKSRGLD (235 aa)). Cysteines 106 and 338 form a disulfide. Cys113, Cys117, and Cys120 together coordinate [4Fe-4S] cluster. S-adenosyl-L-methionine contacts are provided by residues 160–161 (GE), Ser190, 219–221 (SLH), and Asn295. Cys338 acts as the S-methylcysteine intermediate in catalysis.

Belongs to the radical SAM superfamily. RlmN family. Requires [4Fe-4S] cluster as cofactor.

The protein localises to the cytoplasm. The catalysed reaction is adenosine(2503) in 23S rRNA + 2 reduced [2Fe-2S]-[ferredoxin] + 2 S-adenosyl-L-methionine = 2-methyladenosine(2503) in 23S rRNA + 5'-deoxyadenosine + L-methionine + 2 oxidized [2Fe-2S]-[ferredoxin] + S-adenosyl-L-homocysteine. The enzyme catalyses adenosine(37) in tRNA + 2 reduced [2Fe-2S]-[ferredoxin] + 2 S-adenosyl-L-methionine = 2-methyladenosine(37) in tRNA + 5'-deoxyadenosine + L-methionine + 2 oxidized [2Fe-2S]-[ferredoxin] + S-adenosyl-L-homocysteine. In terms of biological role, specifically methylates position 2 of adenine 2503 in 23S rRNA and position 2 of adenine 37 in tRNAs. This Prochlorococcus marinus (strain MIT 9312) protein is Probable dual-specificity RNA methyltransferase RlmN.